The sequence spans 334 residues: MKETIAYLGMGMWGFSLANLLANNGHRVVGWARNPSLIEQLSTQRQHPAAPHVTIPSNLSFTSSMEEALDGATMIVEGVTSAGMRPVLNQLKSITDLQIPLVITSKGIEQNTGLLLSEIALEIFGKPAAKYLGYLSGPSIASEVLRGCPCSVVISAYDPATLKQIHQAFLTPTFRVYPNSDLKGVALGGALKNVIAIACGISDGFRFGDNAKSGLVTRGLHEIRKFATIMGCRPDTLNGLAGLGDLCTTCFSAFSRNTLFGKMLAEGLTPEQAKTKIGMVVEGVYTALSAHQIATHHKIDMPITTGVYRVLYENLDIQKGIAQLLQRNTKEEYL.

Residues Trp-13, Arg-33, and Lys-106 each contribute to the NADPH site. Sn-glycerol 3-phosphate-binding residues include Lys-106, Gly-137, and Ser-139. Ala-141 lines the NADPH pocket. Sn-glycerol 3-phosphate contacts are provided by Lys-192, Asp-245, Ser-255, Arg-256, and Asn-257. Lys-192 acts as the Proton acceptor in catalysis. Arg-256 provides a ligand contact to NADPH. Residues Val-280 and Glu-282 each coordinate NADPH.

It belongs to the NAD-dependent glycerol-3-phosphate dehydrogenase family.

It localises to the cytoplasm. The enzyme catalyses sn-glycerol 3-phosphate + NAD(+) = dihydroxyacetone phosphate + NADH + H(+). It catalyses the reaction sn-glycerol 3-phosphate + NADP(+) = dihydroxyacetone phosphate + NADPH + H(+). It participates in membrane lipid metabolism; glycerophospholipid metabolism. Functionally, catalyzes the reduction of the glycolytic intermediate dihydroxyacetone phosphate (DHAP) to sn-glycerol 3-phosphate (G3P), the key precursor for phospholipid synthesis. The protein is Glycerol-3-phosphate dehydrogenase [NAD(P)+] of Chlamydia muridarum (strain MoPn / Nigg).